The following is a 313-amino-acid chain: Potassium channel subfamily K member 6 (313 aa).

The Cytoplasmic segment spans residues 1-4 (MRRG). A helical membrane pass occupies residues 5-25 (ALLASALAAYAGYLALGALLV). N-linked (GlcNAc...) asparagine glycans are attached at residues asparagine 79 and asparagine 85. The pore-forming intramembrane region spans 90–115 (AWDFASALFFASTLVTTVGYGYTTPL). The K(+) site is built by threonine 106, valine 107, glycine 108, and tyrosine 109. The selectivity filter 1 stretch occupies residues 106–111 (TVGYGY). The helical transmembrane segment at 121-141 (AFSIVFALLGVPITMLLLTAS) threads the bilayer. The Cytoplasmic segment spans residues 142 to 172 (AQRLSLLLTHAPLSWLSLHWGWPPQRAARWH). The helical transmembrane segment at 173–193 (LVALLMVIVAIFFLVPAAVFA) threads the bilayer. Residues 199–223 (WSFLDAFYFCFISLSTIGLGDYVPG) constitute an intramembrane region (pore-forming). 3 residues coordinate K(+): threonine 214, isoleucine 215, and glycine 216. Positions 214 to 219 (TIGLGD) are selectivity filter 2. A helical membrane pass occupies residues 236–256 (VLVTAYLFLGLVAMVLVLQTF). Over 257 to 313 (RRVSDLHGLTELILLPDPDPASLSQDEDDQVAVLDARTDLHQHLSAASHADYASIPR) the chain is Cytoplasmic. 2 consecutive short sequence motifs (lysosomal targeting signal) follow at residues 282-290 (DEDDQVAVL) and 308-312 (YASIP).

This sequence belongs to the two pore domain potassium channel (TC 1.A.1.8) family. As to quaternary structure, homodimer; disulfide-linked. In terms of processing, N-glycosylation is necessary for targeting to lysosomes.

It localises to the late endosome membrane. The protein resides in the lysosome membrane. It catalyses the reaction K(+)(in) = K(+)(out). K(+) channel that conducts outward rectifying currents at the membranes of the endolysosomal system. Active in lysosomes where it regulates lysosome numbers and size. In macrophages, enables K(+) efflux coupled to ATP-induced NLRP3 inflammasome activation upon bacterial infection. Cooperates with ATP-gated P2RX7 to activate NLRP3 inflammasome, with P2RX7 conducting Ca(2+) and Na(+) influx that sets the membrane potential for K(+) efflux. The sequence is that of Potassium channel subfamily K member 6 from Mus musculus (Mouse).